A 115-amino-acid polypeptide reads, in one-letter code: Cycloviolacin-O13 (115 aa).

The N-terminal stretch at 1-22 (MDAKKMFVALVLIATFALPSLA) is a signal peptide. The propeptide occupies 23-81 (TFEKDFITPETIQAILKKSAPLSNIMLEEDVINALLKSKTVISNPIIEEAFLKNSNGLN). A cross-link (cyclopeptide (Gly-Asn)) is located at residues 82 to 111 (GIPCGESCVWIPCISAAIGCSCKSKVCYRN). Cystine bridges form between Cys85–Cys101, Cys89–Cys103, and Cys94–Cys108. A propeptide spanning residues 112–115 (SLDN) is cleaved from the precursor.

Post-translationally, cycloviolacin-O13 is a cyclic peptide. Expressed in leaves, petals, petioles, roots and runners (at protein level).

Functionally, probably participates in a plant defense mechanism. Has hemolytic activity. The polypeptide is Cycloviolacin-O13 (Viola odorata (Sweet violet)).